The following is a 382-amino-acid chain: tRNA(Met) cytidine acetate ligase (382 aa).

Residues 9 to 22 (VTEY…HAYQ), Gly-103, Asn-152, and Arg-177 contribute to the ATP site.

This sequence belongs to the TmcAL family.

It localises to the cytoplasm. The catalysed reaction is cytidine(34) in elongator tRNA(Met) + acetate + ATP = N(4)-acetylcytidine(34) in elongator tRNA(Met) + AMP + diphosphate. In terms of biological role, catalyzes the formation of N(4)-acetylcytidine (ac(4)C) at the wobble position of elongator tRNA(Met), using acetate and ATP as substrates. First activates an acetate ion to form acetyladenylate (Ac-AMP) and then transfers the acetyl group to tRNA to form ac(4)C34. This chain is tRNA(Met) cytidine acetate ligase, found in Levilactobacillus brevis (strain ATCC 367 / BCRC 12310 / CIP 105137 / JCM 1170 / LMG 11437 / NCIMB 947 / NCTC 947) (Lactobacillus brevis).